The following is a 486-amino-acid chain: Vesicular GABA transporter (486 aa).

The Cytoplasmic segment spans residues Met1–Gln93. Residues Leu29–Ser46 are compositionally biased toward polar residues. The segment at Leu29–Ala85 is disordered. Residues Pro66–Ala85 are compositionally biased toward basic and acidic residues. The helical transmembrane segment at Ala94–Val114 threads the bilayer. Residues Lys115–Trp119 are Lumenal, vesicle-facing. A helical membrane pass occupies residues Trp120–Ile140. The Cytoplasmic portion of the chain corresponds to Glu141 to Lys167. A helical membrane pass occupies residues Trp168–Ala188. Residues Ala189–Gly203 lie on the Lumenal, vesicle side of the membrane. The helical transmembrane segment at Trp204–Val224 threads the bilayer. Residues Ser225 to Ser228 lie on the Cytoplasmic side of the membrane. The helical transmembrane segment at Phe229–Phe249 threads the bilayer. At Val250–Asn263 the chain is on the lumenal, vesicle side. The helical transmembrane segment at Ile264–Leu284 threads the bilayer. Residues Pro285–His305 lie on the Cytoplasmic side of the membrane. Residues Ile306 to Leu326 form a helical membrane-spanning segment. Over Thr327–Lys341 the chain is Lumenal, vesicle. N-linked (GlcNAc...) asparagine glycosylation occurs at Asn337. Residues Ile342–Ala362 form a helical membrane-spanning segment. The Cytoplasmic segment spans residues Ala363 to Arg398. The chain crosses the membrane as a helical span at residues Ile399 to Met419. At Gly420–Leu421 the chain is on the lumenal, vesicle side. A helical membrane pass occupies residues Val422–Ile442. Residues Lys443–Gly457 lie on the Cytoplasmic side of the membrane. Residues Ile458–Leu478 traverse the membrane as a helical segment. Topologically, residues Arg479–Ser486 are lumenal, vesicle.

This sequence belongs to the amino acid/polyamine transporter 2 family.

It is found in the cytoplasmic vesicle membrane. Involved in the uptake of GABA into the synaptic vesicles. The protein is Vesicular GABA transporter (unc-47) of Caenorhabditis elegans.